A 116-amino-acid polypeptide reads, in one-letter code: Large ribosomal subunit protein bL20 (116 aa).

This sequence belongs to the bacterial ribosomal protein bL20 family.

Functionally, binds directly to 23S ribosomal RNA and is necessary for the in vitro assembly process of the 50S ribosomal subunit. It is not involved in the protein synthesizing functions of that subunit. This Mycoplasmopsis fermentans (Mycoplasma fermentans) protein is Large ribosomal subunit protein bL20 (rplT).